A 293-amino-acid chain; its full sequence is Acetylglutamate kinase (293 aa).

Substrate contacts are provided by residues G66 to G67, R88, and N190.

This sequence belongs to the acetylglutamate kinase family. ArgB subfamily.

The protein localises to the cytoplasm. It catalyses the reaction N-acetyl-L-glutamate + ATP = N-acetyl-L-glutamyl 5-phosphate + ADP. Its pathway is amino-acid biosynthesis; L-arginine biosynthesis; N(2)-acetyl-L-ornithine from L-glutamate: step 2/4. In terms of biological role, catalyzes the ATP-dependent phosphorylation of N-acetyl-L-glutamate. This chain is Acetylglutamate kinase, found in Thiobacillus denitrificans (strain ATCC 25259 / T1).